We begin with the raw amino-acid sequence, 427 residues long: Glutamate-1-semialdehyde 2,1-aminomutase (427 aa).

The residue at position 265 (Lys-265) is an N6-(pyridoxal phosphate)lysine.

It belongs to the class-III pyridoxal-phosphate-dependent aminotransferase family. HemL subfamily. Homodimer. The cofactor is pyridoxal 5'-phosphate.

It is found in the cytoplasm. The catalysed reaction is (S)-4-amino-5-oxopentanoate = 5-aminolevulinate. Its pathway is porphyrin-containing compound metabolism; protoporphyrin-IX biosynthesis; 5-aminolevulinate from L-glutamyl-tRNA(Glu): step 2/2. This chain is Glutamate-1-semialdehyde 2,1-aminomutase, found in Teredinibacter turnerae (strain ATCC 39867 / T7901).